Consider the following 455-residue polypeptide: Bifunctional protein GlmU (455 aa).

The tract at residues 1 to 226 is pyrophosphorylase; the sequence is MSLDIVILAA…AMEVQGANDR (226 aa). Residues 8–11, Lys22, Gln73, 78–79, 99–101, Gly136, Glu151, Asn166, and Asn224 contribute to the UDP-N-acetyl-alpha-D-glucosamine site; these read LAAG, GT, and YGD. A Mg(2+)-binding site is contributed by Asp101. Mg(2+) is bound at residue Asn224. The interval 227 to 247 is linker; the sequence is RQLSELERHYQLREGRRLMAQ. The tract at residues 248–455 is N-acetyltransferase; sequence GVTLRDPARF…WKRPEKIKKS (208 aa). UDP-N-acetyl-alpha-D-glucosamine-binding residues include Arg330 and Lys348. His360 (proton acceptor) is an active-site residue. Tyr363 and Asn374 together coordinate UDP-N-acetyl-alpha-D-glucosamine. Acetyl-CoA contacts are provided by residues Ala377, 383–384, Ser402, Ala420, and Arg437; that span reads NY.

This sequence in the N-terminal section; belongs to the N-acetylglucosamine-1-phosphate uridyltransferase family. In the C-terminal section; belongs to the transferase hexapeptide repeat family. Homotrimer. Mg(2+) serves as cofactor.

The protein localises to the cytoplasm. It carries out the reaction alpha-D-glucosamine 1-phosphate + acetyl-CoA = N-acetyl-alpha-D-glucosamine 1-phosphate + CoA + H(+). The catalysed reaction is N-acetyl-alpha-D-glucosamine 1-phosphate + UTP + H(+) = UDP-N-acetyl-alpha-D-glucosamine + diphosphate. Its pathway is nucleotide-sugar biosynthesis; UDP-N-acetyl-alpha-D-glucosamine biosynthesis; N-acetyl-alpha-D-glucosamine 1-phosphate from alpha-D-glucosamine 6-phosphate (route II): step 2/2. It participates in nucleotide-sugar biosynthesis; UDP-N-acetyl-alpha-D-glucosamine biosynthesis; UDP-N-acetyl-alpha-D-glucosamine from N-acetyl-alpha-D-glucosamine 1-phosphate: step 1/1. The protein operates within bacterial outer membrane biogenesis; LPS lipid A biosynthesis. Functionally, catalyzes the last two sequential reactions in the de novo biosynthetic pathway for UDP-N-acetylglucosamine (UDP-GlcNAc). The C-terminal domain catalyzes the transfer of acetyl group from acetyl coenzyme A to glucosamine-1-phosphate (GlcN-1-P) to produce N-acetylglucosamine-1-phosphate (GlcNAc-1-P), which is converted into UDP-GlcNAc by the transfer of uridine 5-monophosphate (from uridine 5-triphosphate), a reaction catalyzed by the N-terminal domain. This Pseudomonas putida (strain ATCC 700007 / DSM 6899 / JCM 31910 / BCRC 17059 / LMG 24140 / F1) protein is Bifunctional protein GlmU.